Here is a 56-residue protein sequence, read N- to C-terminus: Ferredoxin (56 aa).

2 4Fe-4S ferredoxin-type domains span residues Ala2–Asp28 and Ser29–Glu56. Residues Cys9, Cys12, Cys15, Cys19, Cys38, Cys41, Cys44, and Cys48 each coordinate [4Fe-4S] cluster.

Requires [4Fe-4S] cluster as cofactor.

Its function is as follows. Ferredoxins are iron-sulfur proteins that transfer electrons in a wide variety of metabolic reactions. The polypeptide is Ferredoxin (Clostridium pasteurianum).